We begin with the raw amino-acid sequence, 190 residues long: Putative triphosphatase YjbK (190 aa).

The CYTH domain occupies 4–189 (EIEIEFKNML…LRFYEEKRKS (186 aa)).

The chain is Putative triphosphatase YjbK (yjbK) from Bacillus subtilis (strain 168).